The primary structure comprises 117 residues: Large ribosomal subunit protein uL18 (117 aa).

It belongs to the universal ribosomal protein uL18 family. As to quaternary structure, part of the 50S ribosomal subunit; part of the 5S rRNA/L5/L18/L25 subcomplex. Contacts the 5S and 23S rRNAs.

This is one of the proteins that bind and probably mediate the attachment of the 5S RNA into the large ribosomal subunit, where it forms part of the central protuberance. The chain is Large ribosomal subunit protein uL18 from Buchnera aphidicola subsp. Acyrthosiphon kondoi (Acyrthosiphon kondoi symbiotic bacterium).